Reading from the N-terminus, the 117-residue chain is uncharacterized protein (117 aa).

The protein belongs to the mimivirus R69 family.

This is an uncharacterized protein from Acanthamoeba polyphaga mimivirus (APMV).